Reading from the N-terminus, the 1396-residue chain is DNA-directed RNA polymerase subunit beta (1396 aa).

It belongs to the RNA polymerase beta chain family. The RNAP catalytic core consists of 2 alpha, 1 beta, 1 beta' and 1 omega subunit. When a sigma factor is associated with the core the holoenzyme is formed, which can initiate transcription.

The catalysed reaction is RNA(n) + a ribonucleoside 5'-triphosphate = RNA(n+1) + diphosphate. In terms of biological role, DNA-dependent RNA polymerase catalyzes the transcription of DNA into RNA using the four ribonucleoside triphosphates as substrates. The sequence is that of DNA-directed RNA polymerase subunit beta from Erythrobacter litoralis (strain HTCC2594).